Here is a 1026-residue protein sequence, read N- to C-terminus: DNA polymerase catalytic subunit (1026 aa).

Residues 664 to 695 (LKTWLAKRKSIKKELEQCQDAKMKTILDKQQL) are a coiled coil.

It belongs to the DNA polymerase type-B family.

It is found in the host nucleus. The enzyme catalyses DNA(n) + a 2'-deoxyribonucleoside 5'-triphosphate = DNA(n+1) + diphosphate. Functionally, replicates viral genomic DNA. This chain is DNA polymerase catalytic subunit (9), found in Alcelaphine herpesvirus 1 (strain C500) (AlHV-1).